A 735-amino-acid polypeptide reads, in one-letter code: Photosystem I P700 chlorophyll a apoprotein A2 (735 aa).

8 consecutive transmembrane segments (helical) span residues 47 to 70 (IFAS…FHVA), 136 to 159 (LYIG…LHLQ), 176 to 200 (LNHH…HVAI), 274 to 292 (MAHH…GHMY), 331 to 354 (LHFQ…QHMY), 370 to 396 (ASLY…IFFI), 418 to 440 (AIIS…LYVH), and 518 to 536 (FLVH…LILV). 2 residues coordinate [4Fe-4S] cluster: Cys560 and Cys569. The next 2 membrane-spanning stretches (helical) occupy residues 576-597 (AFYL…YFHW) and 644-666 (LSVW…MFLI). Chlorophyll a contacts are provided by His655, Met663, and Tyr671. Trp672 contributes to the phylloquinone binding site. A helical transmembrane segment spans residues 708 to 728 (VVGLAHFSAGYILTYAAFLIA).

It belongs to the PsaA/PsaB family. In terms of assembly, the PsaA/B heterodimer binds the P700 chlorophyll special pair and subsequent electron acceptors. PSI consists of a core antenna complex that captures photons, and an electron transfer chain that converts photonic excitation into a charge separation. The eukaryotic PSI reaction center is composed of at least 11 subunits. Requires P700 is a chlorophyll a/chlorophyll a' dimer, A0 is one or more chlorophyll a, A1 is one or both phylloquinones and FX is a shared 4Fe-4S iron-sulfur center. as cofactor.

It is found in the plastid. It localises to the chloroplast thylakoid membrane. The catalysed reaction is reduced [plastocyanin] + hnu + oxidized [2Fe-2S]-[ferredoxin] = oxidized [plastocyanin] + reduced [2Fe-2S]-[ferredoxin]. Its function is as follows. PsaA and PsaB bind P700, the primary electron donor of photosystem I (PSI), as well as the electron acceptors A0, A1 and FX. PSI is a plastocyanin/cytochrome c6-ferredoxin oxidoreductase, converting photonic excitation into a charge separation, which transfers an electron from the donor P700 chlorophyll pair to the spectroscopically characterized acceptors A0, A1, FX, FA and FB in turn. Oxidized P700 is reduced on the lumenal side of the thylakoid membrane by plastocyanin or cytochrome c6. This Tupiella akineta (Green alga) protein is Photosystem I P700 chlorophyll a apoprotein A2.